The primary structure comprises 433 residues: Acetylcholine receptor-like protein cup-4 (433 aa).

The signal sequence occupies residues 1-24 (MKIIIFVCFILIFYLPIQKKHVNS). N-linked (GlcNAc...) asparagine glycans are attached at residues Asn-41 and Asn-68. Cysteines 178 and 192 form a disulfide. Residues Asn-237 and Asn-249 are each glycosylated (N-linked (GlcNAc...) asparagine). The next 4 helical transmembrane spans lie at 282–302 (EAAV…TFFI), 307–327 (STFL…HDLV), 337–357 (IPFC…TLVL), and 413–433 (PIIG…CLLL).

This sequence belongs to the ligand-gated ion channel (TC 1.A.9) family. Acetylcholine receptor (TC 1.A.9.1) subfamily. Expressed in coelomocytes.

Its subcellular location is the cytoplasmic vesicle membrane. Its function is as follows. Thought to regulate endocytosis in coelomocytes through modulation of phospholipase C activity. Possible acetylcholine receptor. The protein is Acetylcholine receptor-like protein cup-4 (cup-4) of Caenorhabditis elegans.